Consider the following 856-residue polypeptide: Phosphoenolpyruvate synthase (856 aa).

The active-site Tele-phosphohistidine intermediate is the histidine 433. Substrate-binding residues include arginine 523, arginine 636, glutamate 738, glycine 759, serine 760, asparagine 761, and aspartate 762. Glutamate 738 contacts Mg(2+). Position 762 (aspartate 762) interacts with Mg(2+). The active-site Proton donor is the cysteine 809.

This sequence belongs to the PEP-utilizing enzyme family. Mg(2+) serves as cofactor.

The enzyme catalyses pyruvate + ATP + H2O = phosphoenolpyruvate + AMP + phosphate + 2 H(+). The protein operates within carbohydrate biosynthesis; gluconeogenesis. Functionally, catalyzes the phosphorylation of pyruvate to phosphoenolpyruvate. This chain is Phosphoenolpyruvate synthase (ppsA), found in Aquifex aeolicus (strain VF5).